Here is a 330-residue protein sequence, read N- to C-terminus: tRNA dimethylallyltransferase (330 aa).

A compositionally biased stretch (polar residues) spans 1 to 11 (MDYSHSDSPST). A disordered region spans residues 1–21 (MDYSHSDSPSTAPAGKTPVDQ). 29–36 (GPTGAGKS) contributes to the ATP binding site. 31-36 (TGAGKS) contributes to the substrate binding site. Residues 56 to 59 (DSMQ) are interaction with substrate tRNA.

This sequence belongs to the IPP transferase family. Monomer. Mg(2+) serves as cofactor.

It carries out the reaction adenosine(37) in tRNA + dimethylallyl diphosphate = N(6)-dimethylallyladenosine(37) in tRNA + diphosphate. Its function is as follows. Catalyzes the transfer of a dimethylallyl group onto the adenine at position 37 in tRNAs that read codons beginning with uridine, leading to the formation of N6-(dimethylallyl)adenosine (i(6)A). The polypeptide is tRNA dimethylallyltransferase (Corynebacterium urealyticum (strain ATCC 43042 / DSM 7109)).